We begin with the raw amino-acid sequence, 332 residues long: 2,3-diketo-L-gulonate reductase (332 aa).

Catalysis depends on His44, which acts as the Proton donor. NAD(+) contacts are provided by residues Ile168 to Ser174, Trp224 to Lys225, and Gly304 to Glu306.

The protein belongs to the LDH2/MDH2 oxidoreductase family. DlgD subfamily. In terms of assembly, homodimer.

It localises to the cytoplasm. It catalyses the reaction 3-dehydro-L-gulonate + NAD(+) = 2,3-dioxo-L-gulonate + NADH + H(+). It carries out the reaction 3-dehydro-L-gulonate + NADP(+) = 2,3-dioxo-L-gulonate + NADPH + H(+). Catalyzes the reduction of 2,3-diketo-L-gulonate in the presence of NADH, to form 3-keto-L-gulonate. This chain is 2,3-diketo-L-gulonate reductase, found in Salmonella agona (strain SL483).